The sequence spans 368 residues: Agmatine deiminase (368 aa).

Cys-357 functions as the Amidino-cysteine intermediate in the catalytic mechanism.

This sequence belongs to the agmatine deiminase family. In terms of assembly, homodimer.

The catalysed reaction is agmatine + H2O = N-carbamoylputrescine + NH4(+). It participates in amine and polyamine biosynthesis; putrescine biosynthesis via agmatine pathway; N-carbamoylputrescine from agmatine: step 1/1. Its function is as follows. Mediates the hydrolysis of agmatine into N-carbamoylputrescine in the arginine decarboxylase (ADC) pathway of putrescine biosynthesis, a basic polyamine. In Pseudomonas syringae pv. syringae (strain B728a), this protein is Agmatine deiminase.